Consider the following 651-residue polypeptide: MSGELNGNDTSAQAAVSAGSVLEGAAFADEGEQHNESMKTLVLGALGVVYGDIGTSPIYAFREALHAAATNGILARSDILGVVSLIFWALTLVVTVKYVLFVLRADNNGEGGILSLMALVRGALKGRPDLILGVGICGAALFFGDAVITPAISVLSAMEGLEIVAPNLTPFVVPAAVVILVTLFSVQKLGTGRVAIVFGPIMALWFVALGASGLWHIFDDPTVMAALNPYYAVRFLTVSPAVAFVTVGAVFLAMTGAEALYADLGHFGRKPIVRAWLWIVFPCLLLNYFGQAAFILSHGEAAALPFFQMIPSFALWPMVLLATAATVIASQAVITGAYSVARQAVQLNILPRLEIQHTSEKLHGQIYIPRVNLLLGLAVVILVLGFEKSSNLAAAYGIAVTGNMLVTTVLLYIAMTRIWNWRVSRALPIILGFLVIDMLFFSANIIKVHEGGWASIGIATVLVLIMWTWVRGTRHLFQKTRKAEVPLDLIVEQMAKRPPTIVPGTAVFLTGDPKSAPTALMHSLKHYKVLHENNVILTVVTASKPWVASADRARVSQYNERFMLVTLTFGYMQQPNIPRALGLCRRLGWKFDIMTTSFFLSRRSLKASVHSGMPLWQDKLFILLARTASDATEYFQIPTGRVVEIGTQVNI.

Helical transmembrane passes span Leu-41–Phe-61, Val-82–Val-102, Leu-130–Pro-150, Ile-163–Leu-183, Val-194–Leu-214, Phe-235–Thr-255, Trp-276–Leu-296, Met-309–Ala-329, Ile-366–Phe-386, Ala-395–Met-415, Ala-426–Ile-446, and Glu-450–Val-470.

The protein belongs to the HAK/KUP transporter (TC 2.A.72) family.

Its subcellular location is the cell inner membrane. The catalysed reaction is K(+)(in) + H(+)(in) = K(+)(out) + H(+)(out). In terms of biological role, transport of potassium into the cell. Likely operates as a K(+):H(+) symporter. The chain is Probable potassium transport system protein Kup from Brucella abortus (strain S19).